The chain runs to 483 residues: Rhamnulokinase (483 aa).

11–15 (ASSGR) is an ATP binding site. Substrate is bound by residues G79 and 234–236 (HDT). The active-site Proton acceptor is the D235. T257 serves as a coordination point for ATP. N294 is a binding site for substrate. Q302 contacts ATP. An intrachain disulfide couples C352 to C369. An ATP-binding site is contributed by G401.

This sequence belongs to the rhamnulokinase family. Mg(2+) serves as cofactor.

It catalyses the reaction L-rhamnulose + ATP = L-rhamnulose 1-phosphate + ADP + H(+). It participates in carbohydrate degradation; L-rhamnose degradation; glycerone phosphate from L-rhamnose: step 2/3. Functionally, involved in the catabolism of L-rhamnose (6-deoxy-L-mannose). Catalyzes the transfer of the gamma-phosphate group from ATP to the 1-hydroxyl group of L-rhamnulose to yield L-rhamnulose 1-phosphate. In Listeria monocytogenes serovar 1/2a (strain ATCC BAA-679 / EGD-e), this protein is Rhamnulokinase.